The primary structure comprises 473 residues: MTNQPLTLAEKVWRDHIVAAGENGGPDLLYIDLHLVHEVTSPQAFDGLRQAGRKVRRPDLTIATEDHNVPTIGVKTGDLQEIQEPTSRLQVSTLRDNAKEFGIRLHSMGDIEQGIVHTVGPQLGLTQPGMTVVCGDSHTSTHGAFGSIAMGIGTSEVEHVLATQTLPLKPFKTMAIEVSGELQPDVTSKDLILAIIAKIGTGGGQGHIIEYRGEAIEKLSMEARMTMCNMSIEAGARAGMIAPDQVTFDYLEGRPHAPKGADWDAAVEYWKSLRTDDDAQFDTVVHIDGSALTPFVTWGTNPGQGLPLAEAIPQLEDFTNDNDRLAAERAMEYMDLQPGTPLRDIKIDTVFLGSCTNSRIEDLRAAADVLKGRTVADGTRMIVVPSSTRVKMQAEEEGLDQIFIDAGAEWRTAGCSMCLGMNPDQLAPGERSASTSNRNFEGRQGKGGRTHLVSPPVAAATAVTGHLAGPADL.

Cysteine 355, cysteine 415, and cysteine 418 together coordinate [4Fe-4S] cluster. The disordered stretch occupies residues 423 to 452 (PDQLAPGERSASTSNRNFEGRQGKGGRTHL).

This sequence belongs to the aconitase/IPM isomerase family. LeuC type 1 subfamily. Heterodimer of LeuC and LeuD. Requires [4Fe-4S] cluster as cofactor.

It carries out the reaction (2R,3S)-3-isopropylmalate = (2S)-2-isopropylmalate. It participates in amino-acid biosynthesis; L-leucine biosynthesis; L-leucine from 3-methyl-2-oxobutanoate: step 2/4. Catalyzes the isomerization between 2-isopropylmalate and 3-isopropylmalate, via the formation of 2-isopropylmaleate. This chain is 3-isopropylmalate dehydratase large subunit, found in Corynebacterium jeikeium (strain K411).